A 125-amino-acid chain; its full sequence is Cu-Zn superoxide dismutase-like protein OPG175 (125 aa).

An intrachain disulfide couples Cys52 to Cys102.

It belongs to the Cu-Zn superoxide dismutase family.

Its subcellular location is the virion. It localises to the host cytoplasm. Superoxide dismutase-like protein with no enzymatic activity. The protein is Cu-Zn superoxide dismutase-like protein OPG175 (OPG175) of Homo sapiens (Human).